Reading from the N-terminus, the 79-residue chain is MAKAAALRKPKKKVNPLDKDGITYIDYKDTALLRKFISDRGKIRARRVTGVTSQQQRQIARAVKNAREMALLPYTATAR.

Belongs to the bacterial ribosomal protein bS18 family. In terms of assembly, part of the 30S ribosomal subunit. Forms a tight heterodimer with protein bS6.

Binds as a heterodimer with protein bS6 to the central domain of the 16S rRNA, where it helps stabilize the platform of the 30S subunit. The polypeptide is Small ribosomal subunit protein bS18 (Salinispora arenicola (strain CNS-205)).